A 346-amino-acid polypeptide reads, in one-letter code: Haptoglobin (346 aa).

The first 18 residues, 1-18 (MRALGAVVTLLLWGQLFA), serve as a signal peptide directing secretion. The Sushi domain maps to 31–87 (DSCPKPPEIENGYVEHLVRYRCQHYRLRTEGDGVYTLNSEKQWVNTAAGERLPECEA). Disulfide bonds link C52/C85, C89/C206, C249/C280, and C291/C321. Residues 102–344 (IIGGSLDAKG…FLDWIQETMA (243 aa)) form the Peptidase S1 domain. 2 N-linked (GlcNAc...) asparagine glycosylation sites follow: N147 and N181. Residues 258 to 263 (VPEKEG) are interaction with CD163.

Belongs to the peptidase S1 family. Tetramer of two alpha and two beta chains; disulfide-linked. The hemoglobin/haptoglobin complex is composed of a haptoglobin dimer bound to two hemoglobin alpha-beta dimers. Interacts with CD163. Interacts with ERGIC3. Expressed by the liver and secreted in plasma.

The protein resides in the secreted. Its function is as follows. As a result of hemolysis, hemoglobin is found to accumulate in the kidney and is secreted in the urine. Haptoglobin captures, and combines with free plasma hemoglobin to allow hepatic recycling of heme iron and to prevent kidney damage. Haptoglobin also acts as an antioxidant, has antibacterial activity and plays a role in modulating many aspects of the acute phase response. Hemoglobin/haptoglobin complexes are rapidly cleared by the macrophage CD163 scavenger receptor expressed on the surface of liver Kupfer cells through an endocytic lysosomal degradation pathway. This chain is Haptoglobin (HP), found in Mesocricetus auratus (Golden hamster).